The primary structure comprises 281 residues: Shikimate dehydrogenase (NADP(+)) (281 aa).

Residues 15–17 (SKS) and Thr62 each bind shikimate. Lys66 serves as the catalytic Proton acceptor. Residues Asn87 and Asp102 each contribute to the shikimate site. NADP(+) contacts are provided by residues 127–131 (GAGGS), 151–156 (NRTPER), and Leu217. Tyr219 contributes to the shikimate binding site. Gly241 is a binding site for NADP(+).

It belongs to the shikimate dehydrogenase family. Homodimer.

It catalyses the reaction shikimate + NADP(+) = 3-dehydroshikimate + NADPH + H(+). The protein operates within metabolic intermediate biosynthesis; chorismate biosynthesis; chorismate from D-erythrose 4-phosphate and phosphoenolpyruvate: step 4/7. Its function is as follows. Involved in the biosynthesis of the chorismate, which leads to the biosynthesis of aromatic amino acids. Catalyzes the reversible NADPH linked reduction of 3-dehydroshikimate (DHSA) to yield shikimate (SA). This chain is Shikimate dehydrogenase (NADP(+)), found in Stenotrophomonas maltophilia (strain K279a).